The primary structure comprises 212 residues: ATP-dependent dethiobiotin synthetase BioD (212 aa).

13–18 (GIGKTV) is an ATP binding site. Residue Thr-17 coordinates Mg(2+). The active site involves Lys-33. Ser-37 is a substrate binding site. Glu-100 serves as a coordination point for Mg(2+). Residues 100–103 (EGAG) and 184–186 (PLL) each bind ATP.

This sequence belongs to the dethiobiotin synthetase family. In terms of assembly, homodimer. Mg(2+) is required as a cofactor.

It is found in the cytoplasm. It carries out the reaction (7R,8S)-7,8-diammoniononanoate + CO2 + ATP = (4R,5S)-dethiobiotin + ADP + phosphate + 3 H(+). Its pathway is cofactor biosynthesis; biotin biosynthesis; biotin from 7,8-diaminononanoate: step 1/2. In terms of biological role, catalyzes a mechanistically unusual reaction, the ATP-dependent insertion of CO2 between the N7 and N8 nitrogen atoms of 7,8-diaminopelargonic acid (DAPA, also called 7,8-diammoniononanoate) to form a ureido ring. The polypeptide is ATP-dependent dethiobiotin synthetase BioD (Brucella melitensis biotype 2 (strain ATCC 23457)).